Reading from the N-terminus, the 361-residue chain is Histidinol-phosphate aminotransferase (361 aa).

Residues 26–45 (GMDPEDLTKLSSNENPHGPS) are disordered. An N6-(pyridoxal phosphate)lysine modification is found at Lys222.

It belongs to the class-II pyridoxal-phosphate-dependent aminotransferase family. Histidinol-phosphate aminotransferase subfamily. Requires pyridoxal 5'-phosphate as cofactor.

The catalysed reaction is L-histidinol phosphate + 2-oxoglutarate = 3-(imidazol-4-yl)-2-oxopropyl phosphate + L-glutamate. Its pathway is amino-acid biosynthesis; L-histidine biosynthesis; L-histidine from 5-phospho-alpha-D-ribose 1-diphosphate: step 7/9. The sequence is that of Histidinol-phosphate aminotransferase (hisC) from Haloferax volcanii (strain ATCC 29605 / DSM 3757 / JCM 8879 / NBRC 14742 / NCIMB 2012 / VKM B-1768 / DS2) (Halobacterium volcanii).